A 317-amino-acid chain; its full sequence is Beta-ketoacyl-[acyl-carrier-protein] synthase III (317 aa).

Residues Cys112 and His244 contribute to the active site. Residues 245-249 (QANIR) are ACP-binding. Asn274 is an active-site residue.

Belongs to the thiolase-like superfamily. FabH family. Homodimer.

The protein localises to the cytoplasm. It catalyses the reaction malonyl-[ACP] + acetyl-CoA + H(+) = 3-oxobutanoyl-[ACP] + CO2 + CoA. Its pathway is lipid metabolism; fatty acid biosynthesis. Its function is as follows. Catalyzes the condensation reaction of fatty acid synthesis by the addition to an acyl acceptor of two carbons from malonyl-ACP. Catalyzes the first condensation reaction which initiates fatty acid synthesis and may therefore play a role in governing the total rate of fatty acid production. Possesses both acetoacetyl-ACP synthase and acetyl transacylase activities. Its substrate specificity determines the biosynthesis of branched-chain and/or straight-chain of fatty acids. The protein is Beta-ketoacyl-[acyl-carrier-protein] synthase III of Rickettsia typhi (strain ATCC VR-144 / Wilmington).